A 959-amino-acid polypeptide reads, in one-letter code: Translation initiation factor IF-2 (959 aa).

The segment covering 1–10 (MSDKTNDDKT) has biased composition (basic and acidic residues). The tract at residues 1 to 374 (MSDKTNDDKT…SQMQETREKI (374 aa)) is disordered. Polar residues predominate over residues 27–37 (EQSTVRQNFSH). 2 stretches are compositionally biased toward low complexity: residues 63–118 (AAAA…VTKP) and 128–138 (QRPGGQQAQRP). Basic and acidic residues-rich tracts occupy residues 154–225 (SEMD…EAAK) and 232–241 (ARSERRDDAR). Positions 246–284 (GARPQQAGRPQGGRPQPAGRPQQGSPRPAPIIADAAPIA) are enriched in low complexity. A compositionally biased stretch (basic and acidic residues) spans 318-333 (PEVRAPKVVKGEDDRR). A tr-type G domain is found at 457–626 (SRPPVVTIMG…LLQAEMLDLK (170 aa)). The interval 466–473 (GHVDHGKT) is G1. 466–473 (GHVDHGKT) contacts GTP. The tract at residues 491–495 (GITQH) is G2. Residues 512-515 (DTPG) are G3. Residues 512–516 (DTPGH) and 566–569 (NKID) each bind GTP. A G4 region spans residues 566–569 (NKID). The segment at 602–604 (SAK) is G5.

It belongs to the TRAFAC class translation factor GTPase superfamily. Classic translation factor GTPase family. IF-2 subfamily.

It is found in the cytoplasm. In terms of biological role, one of the essential components for the initiation of protein synthesis. Protects formylmethionyl-tRNA from spontaneous hydrolysis and promotes its binding to the 30S ribosomal subunits. Also involved in the hydrolysis of GTP during the formation of the 70S ribosomal complex. The polypeptide is Translation initiation factor IF-2 (Brucella ovis (strain ATCC 25840 / 63/290 / NCTC 10512)).